Reading from the N-terminus, the 213-residue chain is Chromosome segregation in meiosis protein 2 (213 aa).

Belongs to the CSM2 family. Component of the SHU complex composed of at least CSM2, PSY3, SHU1 and SHU2.

The protein localises to the cytoplasm. Its subcellular location is the nucleus. Its function is as follows. Involved in chromosome segregation during meiosis. Promotes efficient recombinational repair and functions in the protection of the genome from spontaneous and induced DNA damage like mutations and gross chromosomal rearrangements (GCRs). The polypeptide is Chromosome segregation in meiosis protein 2 (CSM2) (Saccharomyces cerevisiae (strain ATCC 204508 / S288c) (Baker's yeast)).